A 491-amino-acid chain; its full sequence is Angiopoietin-related protein 1 (491 aa).

The N-terminal stretch at 1-23 (MKTFTWTLGVLFFLLVDTGHCRG) is a signal peptide. Positions 80-168 (ITRMDLENLK…LNVTTEMLKM (89 aa)) form a coiled coil. 2 N-linked (GlcNAc...) asparagine glycosylation sites follow: Asn160 and Asn188. Residues 271-491 (FINEGPFKDC…AVQMMIKPID (221 aa)) enclose the Fibrinogen C-terminal domain. Cystine bridges form between Cys280-Cys309 and Cys432-Cys445.

Highly expressed in adrenal gland, placenta, thyroid gland, heart, skeletal muscle and small intestine. Weakly expressed in testis, ovary, colon, pancreas, kidney and stomach.

It is found in the secreted. The protein is Angiopoietin-related protein 1 (ANGPTL1) of Homo sapiens (Human).